The primary structure comprises 127 residues: Large ribosomal subunit protein eL24 (127 aa).

The interval 93 to 127 (KRAQKPEVKQAAAEQAKREIKEKKKAAAKKAAPKK) is disordered. A compositionally biased stretch (basic residues) spans 115–127 (KKKAAAKKAAPKK).

Belongs to the eukaryotic ribosomal protein eL24 family.

The chain is Large ribosomal subunit protein eL24 (rpl24) from Dictyostelium discoideum (Social amoeba).